Reading from the N-terminus, the 281-residue chain is Bifunctional protein FolD (281 aa).

NADP(+) is bound by residues 165–167, Thr192, and Val233; that span reads GRG.

Belongs to the tetrahydrofolate dehydrogenase/cyclohydrolase family. In terms of assembly, homodimer.

It catalyses the reaction (6R)-5,10-methylene-5,6,7,8-tetrahydrofolate + NADP(+) = (6R)-5,10-methenyltetrahydrofolate + NADPH. The catalysed reaction is (6R)-5,10-methenyltetrahydrofolate + H2O = (6R)-10-formyltetrahydrofolate + H(+). Its pathway is one-carbon metabolism; tetrahydrofolate interconversion. Functionally, catalyzes the oxidation of 5,10-methylenetetrahydrofolate to 5,10-methenyltetrahydrofolate and then the hydrolysis of 5,10-methenyltetrahydrofolate to 10-formyltetrahydrofolate. The polypeptide is Bifunctional protein FolD (Corynebacterium diphtheriae (strain ATCC 700971 / NCTC 13129 / Biotype gravis)).